The chain runs to 544 residues: Protein kinase dsk1 (544 aa).

In terms of domain architecture, Protein kinase spans 81–516; that stretch reads YVVERKLGWG…AGYMSNSPWL (436 aa). Residues 87 to 95 and K110 each bind ATP; that span reads LGWGHFSTV. D214 serves as the catalytic Proton acceptor. Disordered stretches follow at residues 235 to 299 and 316 to 341; these read PATT…SSPF and ISLRDSQKHNSHPNSPFSSGDNSLIL. A compositionally biased stretch (low complexity) spans 237-254; the sequence is TTSSPTSNTSSSKTRNNT. 2 stretches are compositionally biased toward polar residues: residues 281–299 and 327–337; these read KNPTKNSKPAGQVIPSSPF and HPNSPFSSGDN.

It belongs to the protein kinase superfamily. Ser/Thr protein kinase family. Phosphorylated on Ser residue(s).

It localises to the cytoplasm. The protein resides in the nucleus. It catalyses the reaction L-seryl-[protein] + ATP = O-phospho-L-seryl-[protein] + ADP + H(+). The catalysed reaction is L-threonyl-[protein] + ATP = O-phospho-L-threonyl-[protein] + ADP + H(+). Its function is as follows. May play an important role in mitotic control by altering cellular location, degree of phosphorylation and kinase activity. Abundant expression accelerates the exit when cells are in M-phase and also delays the entry into mitosis when cells are in G2. Phosphorylates prp2 in vitro and so may have a role in co-ordinating pre-mRNA splicing with the progression of the cell division cycle. This Schizosaccharomyces pombe (strain 972 / ATCC 24843) (Fission yeast) protein is Protein kinase dsk1 (dsk1).